A 24-amino-acid chain; its full sequence is Brevinin-1BYb (24 aa).

The cysteines at positions 18 and 24 are disulfide-linked.

In terms of tissue distribution, expressed by the skin glands.

It is found in the secreted. Its function is as follows. Antibacterial activity against Gram-positive bacterium S.aureus and Gram-negative bacterium E.coli. Has moderate antifungal activity against C.albicans and strong hemolytic activity. This chain is Brevinin-1BYb, found in Rana boylii (Foothill yellow-legged frog).